Consider the following 476-residue polypeptide: tRNA(Ile)-lysidine synthase (476 aa).

25-30 (SGGPDS) is an ATP binding site.

Belongs to the tRNA(Ile)-lysidine synthase family.

Its subcellular location is the cytoplasm. The enzyme catalyses cytidine(34) in tRNA(Ile2) + L-lysine + ATP = lysidine(34) in tRNA(Ile2) + AMP + diphosphate + H(+). Functionally, ligates lysine onto the cytidine present at position 34 of the AUA codon-specific tRNA(Ile) that contains the anticodon CAU, in an ATP-dependent manner. Cytidine is converted to lysidine, thus changing the amino acid specificity of the tRNA from methionine to isoleucine. This chain is tRNA(Ile)-lysidine synthase, found in Bacillus licheniformis (strain ATCC 14580 / DSM 13 / JCM 2505 / CCUG 7422 / NBRC 12200 / NCIMB 9375 / NCTC 10341 / NRRL NRS-1264 / Gibson 46).